Here is a 113-residue protein sequence, read N- to C-terminus: Retrotransposon Gag-like protein 8 (113 aa).

Belongs to the FAM127 family.

This is Retrotransposon Gag-like protein 8 (RTL8A) from Bos taurus (Bovine).